A 112-amino-acid polypeptide reads, in one-letter code: Putative pterin-4-alpha-carbinolamine dehydratase (112 aa).

Belongs to the pterin-4-alpha-carbinolamine dehydratase family.

It carries out the reaction (4aS,6R)-4a-hydroxy-L-erythro-5,6,7,8-tetrahydrobiopterin = (6R)-L-erythro-6,7-dihydrobiopterin + H2O. This is Putative pterin-4-alpha-carbinolamine dehydratase from Vibrio campbellii (strain ATCC BAA-1116).